The sequence spans 273 residues: MSAAPRIGILGAGGRMGRILIQAVQQAGYQLGAAVVRPESTLIGADAGELAGIGSIGVKLTGSLAEVLEDCDVVIDFSTPAATSEHLKLCREAGVAIVIGTTGMSDEQKAELDETAKHIPVVYAANYSVGVNVSIKLLELAAKVFGDTVDIEVIEAHHRHKVDAPSGTALMMGEAIADTLGRNLKEVAVYGREGHTGPRDRQTIGFETIRGGDIVGEHTVMFIGEGERVEVTHKATNRMNFAAGAVRAAAWVVGREARKYDMKDVLGLNDVQV.

NAD(+) is bound at residue 11 to 16 (GAGGRM). Arg-37 provides a ligand contact to NADP(+). Residues 100-102 (GTT) and 124-127 (AANY) contribute to the NAD(+) site. Catalysis depends on His-157, which acts as the Proton donor/acceptor. His-158 is a (S)-2,3,4,5-tetrahydrodipicolinate binding site. The active-site Proton donor is Lys-161. 167-168 (GT) serves as a coordination point for (S)-2,3,4,5-tetrahydrodipicolinate.

The protein belongs to the DapB family.

It is found in the cytoplasm. The enzyme catalyses (S)-2,3,4,5-tetrahydrodipicolinate + NAD(+) + H2O = (2S,4S)-4-hydroxy-2,3,4,5-tetrahydrodipicolinate + NADH + H(+). It carries out the reaction (S)-2,3,4,5-tetrahydrodipicolinate + NADP(+) + H2O = (2S,4S)-4-hydroxy-2,3,4,5-tetrahydrodipicolinate + NADPH + H(+). It functions in the pathway amino-acid biosynthesis; L-lysine biosynthesis via DAP pathway; (S)-tetrahydrodipicolinate from L-aspartate: step 4/4. In terms of biological role, catalyzes the conversion of 4-hydroxy-tetrahydrodipicolinate (HTPA) to tetrahydrodipicolinate. The sequence is that of 4-hydroxy-tetrahydrodipicolinate reductase from Acinetobacter baumannii (strain AB307-0294).